The chain runs to 363 residues: Flagellar P-ring protein (363 aa).

Positions 1–20 (MKLKLFLLSVLLLVSGSSQA) are cleaved as a signal peptide.

This sequence belongs to the FlgI family. The basal body constitutes a major portion of the flagellar organelle and consists of four rings (L,P,S, and M) mounted on a central rod.

Its subcellular location is the periplasm. It localises to the bacterial flagellum basal body. In terms of biological role, assembles around the rod to form the L-ring and probably protects the motor/basal body from shearing forces during rotation. The polypeptide is Flagellar P-ring protein (Shewanella woodyi (strain ATCC 51908 / MS32)).